Reading from the N-terminus, the 453-residue chain is Omega-3 fatty acid desaturase, chloroplastic (453 aa).

Positions 171–175 match the Histidine box-1 motif; that stretch reads HDCGH. Residues 207–211 carry the Histidine box-2 motif; the sequence is HRTHH. A Histidine box-3 motif is present at residues 374–378; it reads HVIHH.

It belongs to the fatty acid desaturase type 1 family.

It localises to the plastid. The protein resides in the chloroplast membrane. It functions in the pathway lipid metabolism; polyunsaturated fatty acid biosynthesis. Chloroplast omega-3 fatty acid desaturase introduces the third double bond in the biosynthesis of 16:3 and 18:3 fatty acids, important constituents of plant membranes. It is thought to use ferredoxin as an electron donor and to act on fatty acids esterified to galactolipids, sulfolipids and phosphatidylglycerol. The sequence is that of Omega-3 fatty acid desaturase, chloroplastic (FAD7) from Glycine max (Soybean).